The primary structure comprises 499 residues: Ribose import ATP-binding protein RbsA (499 aa).

2 ABC transporter domains span residues V3–E240 and L250–D494. Position 35-42 (G35–S42) interacts with ATP.

Belongs to the ABC transporter superfamily. Ribose importer (TC 3.A.1.2.1) family. The complex is composed of an ATP-binding protein (RbsA), two transmembrane proteins (RbsC) and a solute-binding protein (RbsB).

The protein localises to the cell membrane. It catalyses the reaction D-ribose(out) + ATP + H2O = D-ribose(in) + ADP + phosphate + H(+). Part of the ABC transporter complex RbsABC involved in ribose import. Responsible for energy coupling to the transport system. This Shouchella clausii (strain KSM-K16) (Alkalihalobacillus clausii) protein is Ribose import ATP-binding protein RbsA.